A 151-amino-acid polypeptide reads, in one-letter code: Large ribosomal subunit protein bL9 (151 aa).

It belongs to the bacterial ribosomal protein bL9 family.

In terms of biological role, binds to the 23S rRNA. This is Large ribosomal subunit protein bL9 from Prochlorococcus marinus (strain AS9601).